The primary structure comprises 801 residues: Na(+)/H(+) antiporter subunit A1 (801 aa).

The next 20 membrane-spanning stretches (helical) occupy residues 1–21 (MSLL…IPFL), 30–50 (LGWF…SLIS), 79–99 (LGLL…LYSI), 117–137 (LFMG…LYLF), 166–186 (LIIT…LSLA), 206–226 (PFFI…SAQV), 228–250 (FYIW…HSAT), 265–285 (IFAI…ITLF), 300–320 (ILAF…GIGA), 337–357 (FVAA…LFMI), 373–393 (LGGL…TTLS), 427–447 (LGIL…VYSI), 472–492 (ILML…GLFP), 522–542 (GITP…LLLI), 591–611 (LVII…SVPF), 623–643 (VFEG…IFAK), 646–666 (LFSI…FIFF), 671–691 (LALT…LCFY), 707–727 (LTNA…GLIG), and 764–784 (MDTL…YTMI).

The protein belongs to the CPA3 antiporters (TC 2.A.63) subunit A family. May form a heterooligomeric complex that consists of seven subunits: mnhA1, mnhB1, mnhC1, mnhD1, mnhE1, mnhF1 and mnhG1.

The protein localises to the cell membrane. Mnh complex is a Na(+)/H(+) antiporter involved in Na(+) excretion. The chain is Na(+)/H(+) antiporter subunit A1 (mnhA1) from Staphylococcus epidermidis (strain ATCC 35984 / DSM 28319 / BCRC 17069 / CCUG 31568 / BM 3577 / RP62A).